Here is a 162-residue protein sequence, read N- to C-terminus: ATP synthase subunit b (162 aa).

A helical membrane pass occupies residues 2–22 (LEFNATLLAQIVDFIILLIFL).

Belongs to the ATPase B chain family. F-type ATPases have 2 components, F(1) - the catalytic core - and F(0) - the membrane proton channel. F(1) has five subunits: alpha(3), beta(3), gamma(1), delta(1), epsilon(1). F(0) has three main subunits: a(1), b(2) and c(10-14). The alpha and beta chains form an alternating ring which encloses part of the gamma chain. F(1) is attached to F(0) by a central stalk formed by the gamma and epsilon chains, while a peripheral stalk is formed by the delta and b chains.

It is found in the cell membrane. In terms of biological role, f(1)F(0) ATP synthase produces ATP from ADP in the presence of a proton or sodium gradient. F-type ATPases consist of two structural domains, F(1) containing the extramembraneous catalytic core and F(0) containing the membrane proton channel, linked together by a central stalk and a peripheral stalk. During catalysis, ATP synthesis in the catalytic domain of F(1) is coupled via a rotary mechanism of the central stalk subunits to proton translocation. Its function is as follows. Component of the F(0) channel, it forms part of the peripheral stalk, linking F(1) to F(0). This Pelotomaculum thermopropionicum (strain DSM 13744 / JCM 10971 / SI) protein is ATP synthase subunit b.